The chain runs to 441 residues: Serine carboxypeptidase-like 2 (441 aa).

The N-terminal stretch at 1–29 (MANKYFSSVLKSLLLLLHLVFLSKQHVDS) is a signal peptide. 3 cysteine pairs are disulfide-bonded: Cys88–Cys331, Cys252–Cys266, and Cys290–Cys297. Asn109 is a glycosylation site (N-linked (GlcNAc...) asparagine). Residue Ser184 is part of the active site. A glycan (N-linked (GlcNAc...) asparagine) is linked at Asn350. The active site involves Asp366. Residue Asn382 is glycosylated (N-linked (GlcNAc...) asparagine). His419 is a catalytic residue.

This sequence belongs to the peptidase S10 family. Expressed in seedlings and roots.

It localises to the secreted. Probable carboxypeptidase. In Arabidopsis thaliana (Mouse-ear cress), this protein is Serine carboxypeptidase-like 2 (SCPL2).